Reading from the N-terminus, the 83-residue chain is MASEVRGLRKTKIGVVVSSKMDKTVVVRVERIYSHPQYAKVVRDSRKFYAHDGLGVSEGDKVKIQETRPLSKLKRWRVVERVS.

It belongs to the universal ribosomal protein uS17 family. As to quaternary structure, part of the 30S ribosomal subunit.

Functionally, one of the primary rRNA binding proteins, it binds specifically to the 5'-end of 16S ribosomal RNA. This Chlamydia abortus (strain DSM 27085 / S26/3) (Chlamydophila abortus) protein is Small ribosomal subunit protein uS17.